Here is a 396-residue protein sequence, read N- to C-terminus: S-adenosylmethionine synthase 4 (396 aa).

Glu13 provides a ligand contact to Mg(2+). His19 serves as a coordination point for ATP. Residue Glu47 participates in K(+) binding. The L-methionine site is built by Glu60 and Gln103. Residues 171–173 (DGK), 239–242 (SGRF), Asp250, 256–257 (RK), Ala273, Lys277, and Lys281 each bind ATP. An L-methionine-binding site is contributed by Asp250. An L-methionine-binding site is contributed by Lys281.

It belongs to the AdoMet synthase family. In terms of assembly, homotetramer. Mn(2+) serves as cofactor. Mg(2+) is required as a cofactor. It depends on Co(2+) as a cofactor. Requires K(+) as cofactor. In terms of tissue distribution, expressed in roots, stems and leaves (at protein level).

The protein localises to the cytoplasm. It catalyses the reaction L-methionine + ATP + H2O = S-adenosyl-L-methionine + phosphate + diphosphate. The protein operates within amino-acid biosynthesis; S-adenosyl-L-methionine biosynthesis; S-adenosyl-L-methionine from L-methionine: step 1/1. Functionally, catalyzes the formation of S-adenosylmethionine from methionine and ATP. The reaction comprises two steps that are both catalyzed by the same enzyme: formation of S-adenosylmethionine (AdoMet) and triphosphate, and subsequent hydrolysis of the triphosphate. May be involved in the synthesis of betain in response to abiotic stress such as high salinity. The sequence is that of S-adenosylmethionine synthase 4 (SAMS4) from Atriplex nummularia (Old man saltbush).